A 234-amino-acid chain; its full sequence is Probable plastid-lipid-associated protein 5, chloroplastic (234 aa).

The transit peptide at 1 to 45 (MALPWCLKTGVLTSPAAGFNHPSDSGFAVPTKLLSIRKGDRERLR) directs the protein to the chloroplast.

It belongs to the PAP/fibrillin family.

The protein resides in the plastid. The protein localises to the chloroplast thylakoid. The protein is Probable plastid-lipid-associated protein 5, chloroplastic (PAP5) of Arabidopsis thaliana (Mouse-ear cress).